We begin with the raw amino-acid sequence, 286 residues long: 4-hydroxybenzoate octaprenyltransferase (286 aa).

Transmembrane regions (helical) follow at residues 20–40, 43–63, 95–115, 142–162, 167–187, 210–230, and 234–254; these read IGTL…AGGM, LKVL…GCII, ILFA…NPLV, FLGV…TGEV, WWLF…YAMV, QIIG…GWAA, and LVYG…QKLI.

It belongs to the UbiA prenyltransferase family. Mg(2+) is required as a cofactor.

Its subcellular location is the cell inner membrane. It carries out the reaction all-trans-octaprenyl diphosphate + 4-hydroxybenzoate = 4-hydroxy-3-(all-trans-octaprenyl)benzoate + diphosphate. It participates in cofactor biosynthesis; ubiquinone biosynthesis. Catalyzes the prenylation of para-hydroxybenzoate (PHB) with an all-trans polyprenyl group. Mediates the second step in the final reaction sequence of ubiquinone-8 (UQ-8) biosynthesis, which is the condensation of the polyisoprenoid side chain with PHB, generating the first membrane-bound Q intermediate 3-octaprenyl-4-hydroxybenzoate. The protein is 4-hydroxybenzoate octaprenyltransferase of Shewanella sediminis (strain HAW-EB3).